Consider the following 809-residue polypeptide: Phenylalanine--tRNA ligase beta subunit (809 aa).

A tRNA-binding domain is found at 39–152; sequence KDKWPNVYVG…ADAPVGMLAS (114 aa). The B5 domain maps to 404–492; it reads KDRNSVVLSL…RIAGYDTIPC (89 aa). D470, D476, E479, and E480 together coordinate Mg(2+). The FDX-ACB domain occupies 717 to 808; sequence NRFPSVERDL…LNTETGAVLR (92 aa).

Belongs to the phenylalanyl-tRNA synthetase beta subunit family. Type 1 subfamily. As to quaternary structure, tetramer of two alpha and two beta subunits. Mg(2+) is required as a cofactor.

Its subcellular location is the cytoplasm. It catalyses the reaction tRNA(Phe) + L-phenylalanine + ATP = L-phenylalanyl-tRNA(Phe) + AMP + diphosphate + H(+). The sequence is that of Phenylalanine--tRNA ligase beta subunit from Dehalococcoides mccartyi (strain ATCC BAA-2266 / KCTC 15142 / 195) (Dehalococcoides ethenogenes (strain 195)).